The sequence spans 209 residues: Inducible T-cell costimulator (209 aa).

The N-terminal stretch at 1-19 (MKSDLRYFFLFCIQVEILA) is a signal peptide. The Extracellular portion of the chain corresponds to 20–141 (GEFNDSAASE…YESELCCQLK (122 aa)). An N-linked (GlcNAc...) asparagine glycan is attached at Asn-23. The Ig-like V-type domain occupies 30–133 (MFIFHNGGVQ…LSREYLNIYE (104 aa)). Intrachain disulfides connect Cys-42-Cys-109 and Cys-63-Cys-83. N-linked (GlcNAc...) asparagine glycosylation is present at Asn-89. A helical transmembrane segment spans residues 142 to 162 (FWLPIGCAAFVTVCVFGCVLM).

In terms of assembly, homodimer; disulfide-linked. Interacts with ICOSLG. Interacts with PIK3R1. Interacts with TBK1; this interaction is critical for the maturation of T follicular regulatory cells. In terms of processing, N-glycosylated.

It localises to the cell membrane. Stimulatory receptor expressed in activated or antigen-experienced T-cells that plays an important role in the immune response. Upon binding to its ligand ICOSL expressed on antigen presenting cells (APCs), delivers costimulatory signals that enhances all basic T-cell responses to a foreign antigen, namely proliferation, secretion of lymphokines including IL10, up-regulation of molecules that mediate cell-cell interaction, and effective help for antibody secretion by B-cells. Also acts as a costimulatory receptor critical for the differentiation of T follicular regulatory cells upon immune challenges such as viral infection. Mechanistically, potentiates TCR-induced calcium flux by augmenting PLCG1 activation and actin remodeling. In addition, activates PI3K signaling pathways independently of calcium flux. Essential both for efficient interaction between T and B-cells and for normal antibody responses to T-cell dependent antigens. Prevents the apoptosis of pre-activated T-cells. Plays a critical role in CD40-mediated class switching of immunoglobin isotypes. The sequence is that of Inducible T-cell costimulator (ICOS) from Bos taurus (Bovine).